The sequence spans 389 residues: S-adenosylmethionine synthase (389 aa).

Residue H17 coordinates ATP. D19 is a binding site for Mg(2+). K(+) is bound at residue E45. L-methionine is bound by residues E58 and Q101. Residues 101 to 111 (QSPDISQGVTE) form a flexible loop region. ATP is bound by residues 168-170 (DSK), 234-235 (RF), D243, 249-250 (RK), A266, and K270. D243 is an L-methionine binding site. An L-methionine-binding site is contributed by K274.

Belongs to the AdoMet synthase family. As to quaternary structure, homotetramer; dimer of dimers. Mg(2+) serves as cofactor. Requires K(+) as cofactor.

The protein resides in the cytoplasm. The enzyme catalyses L-methionine + ATP + H2O = S-adenosyl-L-methionine + phosphate + diphosphate. It functions in the pathway amino-acid biosynthesis; S-adenosyl-L-methionine biosynthesis; S-adenosyl-L-methionine from L-methionine: step 1/1. Functionally, catalyzes the formation of S-adenosylmethionine (AdoMet) from methionine and ATP. The overall synthetic reaction is composed of two sequential steps, AdoMet formation and the subsequent tripolyphosphate hydrolysis which occurs prior to release of AdoMet from the enzyme. This is S-adenosylmethionine synthase from Geobacter metallireducens (strain ATCC 53774 / DSM 7210 / GS-15).